A 386-amino-acid chain; its full sequence is Succinate--CoA ligase [ADP-forming] subunit beta (386 aa).

ATP is bound by residues Lys46, 53–55, Glu99, Gln102, and Glu107; that span reads GRG. Mg(2+)-binding residues include Asn199 and Asp213. Substrate contacts are provided by residues Asn264 and 321–323; that span reads GIV.

This sequence belongs to the succinate/malate CoA ligase beta subunit family. In terms of assembly, heterotetramer of two alpha and two beta subunits. Mg(2+) is required as a cofactor.

The enzyme catalyses succinate + ATP + CoA = succinyl-CoA + ADP + phosphate. It catalyses the reaction GTP + succinate + CoA = succinyl-CoA + GDP + phosphate. The protein operates within carbohydrate metabolism; tricarboxylic acid cycle; succinate from succinyl-CoA (ligase route): step 1/1. Its function is as follows. Succinyl-CoA synthetase functions in the citric acid cycle (TCA), coupling the hydrolysis of succinyl-CoA to the synthesis of either ATP or GTP and thus represents the only step of substrate-level phosphorylation in the TCA. The beta subunit provides nucleotide specificity of the enzyme and binds the substrate succinate, while the binding sites for coenzyme A and phosphate are found in the alpha subunit. In Ruthia magnifica subsp. Calyptogena magnifica, this protein is Succinate--CoA ligase [ADP-forming] subunit beta.